A 261-amino-acid chain; its full sequence is 1-(5-phosphoribosyl)-5-[(5-phosphoribosylamino)methylideneamino] imidazole-4-carboxamide isomerase (261 aa).

Asp8 acts as the Proton acceptor in catalysis. The active-site Proton donor is Asp139.

Belongs to the HisA/HisF family.

It localises to the cytoplasm. The enzyme catalyses 1-(5-phospho-beta-D-ribosyl)-5-[(5-phospho-beta-D-ribosylamino)methylideneamino]imidazole-4-carboxamide = 5-[(5-phospho-1-deoxy-D-ribulos-1-ylimino)methylamino]-1-(5-phospho-beta-D-ribosyl)imidazole-4-carboxamide. Its pathway is amino-acid biosynthesis; L-histidine biosynthesis; L-histidine from 5-phospho-alpha-D-ribose 1-diphosphate: step 4/9. The chain is 1-(5-phosphoribosyl)-5-[(5-phosphoribosylamino)methylideneamino] imidazole-4-carboxamide isomerase from Janthinobacterium sp. (strain Marseille) (Minibacterium massiliensis).